An 819-amino-acid chain; its full sequence is MAPLNTYTSTEVLLLDNACNDVHELGRALWSITVDRYHHRDEWTLTCLAEAHGRWDMTYRLVSIQNATTIGQLLAAERLVESPKDASDEDNIFAFATTGSRLPVRTLLGRSSFILQLSEFDGRPTAQVLFSGANNKGQARILLNVFHSLWETHGSSPLNAERPVCEVGGLSYEDVRILELVNSGRLAQQQECIHDVVLQHALQAPTQHAVRAWDGNLTYHQLNDHADRIATMLVSAGIGPGDFIPSIMEKSYWTIVVILATLKAGAVFVPIDPKCPASRINGIFLQVWPKVYFTNLGPQMRRKLNPSVACVDNFAEIVQQVQPGPLPPSRPDAIATCFFTSGSTGKPKGAIHDHSAIATGIVDLLGPFHMDSRTSSMHFVSPSFDVSVTEIAATLYAGGCICVPSEQGKLNDLNGQMRALGVTHAFLTPSVACQVKPSEVPTLQYIMLGGEPLGRATLEALCEDVHLINVYGSTESGLWDTASERLTLQSKPSNIGRSTGPRMWIVHPGNPGNLLPFGTVGEVMVESHCLARGYIGNQPAKTGFVPAPEWRHQLFPGMEQGRFYLTGDLGSYNPDGSIMLHGRKDTQAKIRGQRIELGEIEHQFKAALPTSRVVAEVVTIGSRTMLAAFVELSTAEDKTDIEPSVCVDSLSIRTAQAARLGATPALSAALPVYMVPEMYIPVNSIPLTMSGKTDRRRLRELASTITTVQLEMINGVDDEKEQPRNERERLIQATWAAVLQRKASTIGIHDHFFKIGGDSLSAMKVVAAARSRQLVINVGDILGHPTIASLAEFLSSSSTISYATKGMANRDIQVTVTVL.

The interval 202-591 (LQAPTQHAVR…GRKDTQAKIR (390 aa)) is adenylation (A) domain. A Carrier domain is found at 722–798 (QPRNERERLI…SLAEFLSSSS (77 aa)). Residue Ser-759 is modified to O-(pantetheine 4'-phosphoryl)serine.

The protein belongs to the NRP synthetase family.

The protein operates within secondary metabolite biosynthesis. In terms of biological role, nonribosomal peptide synthetase; part of the Fg3_54/C64 gene cluster that mediates the biosynthesis of the octapeptide fusaoctaxin A, a virulence factor that is required for cell-to-cell invasiveness of plant host. The 2 nonribosomal peptide synthetases NRPS9 and NRPS5 form an assembly line which likely utilizes GABA as a starter unit (loaded on the unique module M1 of NRPS9) and sequentially incorporates seven extender units composed of the residues L-Ala, L-allo-Ile, L-Ser, L-Val, L-Ser, L-Leu and L-Leu, respectively. During the process, each of the residues that are tethered on modules M3-M7 of NRPS5 containing an E domain can undergo an epimerization reaction to produce a D-configuration before the transpeptidation reaction occurs. The elongation of the peptidyl chain might be terminated by module M8-mediated L-Leu incorporation, followed by R domain-catalyzed 4 electron reduction to release the resulting octapeptide from the assembly line as an alcohol. Fusaoctaxin A is cleaved by the cluster specific ABC transporter FGM5 to the pentapeptide fusapentaxin A and the tripeptide fusatrixin A. The other enzymes from the cluster, FGM1, FGM2, FGM3 and FGM9 seem not to be involved in the biosynthesis of fusaoctaxin A and their functions have still to be determined. The protein is Nonribosomal peptide synthetase 9 of Gibberella zeae (strain ATCC MYA-4620 / CBS 123657 / FGSC 9075 / NRRL 31084 / PH-1) (Wheat head blight fungus).